The chain runs to 123 residues: Small ribosomal subunit protein uS12cz/uS12cy (123 aa).

Belongs to the universal ribosomal protein uS12 family. As to quaternary structure, part of the 30S ribosomal subunit.

It localises to the plastid. Its subcellular location is the chloroplast. Functionally, with S4 and S5 plays an important role in translational accuracy. Located at the interface of the 30S and 50S subunits. The polypeptide is Small ribosomal subunit protein uS12cz/uS12cy (rps12-A) (Citrus sinensis (Sweet orange)).